The following is a 276-amino-acid chain: Phosphonoacetaldehyde hydrolase (276 aa).

D19 serves as the catalytic Nucleophile. D19 and A21 together coordinate Mg(2+). K60 acts as the Schiff-base intermediate with substrate in catalysis. D193 is a Mg(2+) binding site.

This sequence belongs to the HAD-like hydrolase superfamily. PhnX family. As to quaternary structure, homodimer. Mg(2+) is required as a cofactor.

It catalyses the reaction phosphonoacetaldehyde + H2O = acetaldehyde + phosphate + H(+). Involved in phosphonate degradation. The chain is Phosphonoacetaldehyde hydrolase from Bordetella bronchiseptica (strain ATCC BAA-588 / NCTC 13252 / RB50) (Alcaligenes bronchisepticus).